We begin with the raw amino-acid sequence, 290 residues long: 4-hydroxy-tetrahydrodipicolinate synthase (290 aa).

A pyruvate-binding site is contributed by threonine 45. Residue tyrosine 133 is the Proton donor/acceptor of the active site. The active-site Schiff-base intermediate with substrate is lysine 161. A pyruvate-binding site is contributed by isoleucine 203.

This sequence belongs to the DapA family. In terms of assembly, homotetramer; dimer of dimers.

The protein localises to the cytoplasm. It catalyses the reaction L-aspartate 4-semialdehyde + pyruvate = (2S,4S)-4-hydroxy-2,3,4,5-tetrahydrodipicolinate + H2O + H(+). Its pathway is amino-acid biosynthesis; L-lysine biosynthesis via DAP pathway; (S)-tetrahydrodipicolinate from L-aspartate: step 3/4. Its function is as follows. Catalyzes the condensation of (S)-aspartate-beta-semialdehyde [(S)-ASA] and pyruvate to 4-hydroxy-tetrahydrodipicolinate (HTPA). In Cellvibrio japonicus (strain Ueda107) (Pseudomonas fluorescens subsp. cellulosa), this protein is 4-hydroxy-tetrahydrodipicolinate synthase.